We begin with the raw amino-acid sequence, 315 residues long: Probable mannose-6-phosphate isomerase GmuF (315 aa).

Positions 95, 97, 115, and 172 each coordinate Zn(2+). Residue Arg-192 is part of the active site.

This sequence belongs to the mannose-6-phosphate isomerase type 1 family. Zn(2+) serves as cofactor.

It carries out the reaction D-mannose 6-phosphate = D-fructose 6-phosphate. Functionally, seems to be involved in the degradation of glucomannan. In Bacillus subtilis (strain 168), this protein is Probable mannose-6-phosphate isomerase GmuF (gmuF).